The chain runs to 315 residues: Probable cytochrome c oxidase subunit 2 (315 aa).

The RPE1 insert domain maps to 6–53 (RHLSKPAYREEFKGDTSPRTAAYISNRADASLGSTYKLPLEAKFWKMS). Transmembrane regions (helical) follow at residues 41 to 61 (YKLP…CFLI), 96 to 116 (LLYI…FVCI), and 133 to 153 (VLIE…IAVP). Positions 235, 270, 274, and 278 each coordinate Cu cation.

Belongs to the cytochrome c oxidase subunit 2 family. It depends on Cu cation as a cofactor. Heme is required as a cofactor.

The protein localises to the cell membrane. It carries out the reaction 4 Fe(II)-[cytochrome c] + O2 + 8 H(+)(in) = 4 Fe(III)-[cytochrome c] + 2 H2O + 4 H(+)(out). Functionally, subunits I and II form the functional core of the enzyme complex. Electrons originating in cytochrome c are transferred via heme a and Cu(A) to the binuclear center formed by heme a3 and Cu(B). The chain is Probable cytochrome c oxidase subunit 2 (ctaC) from Rickettsia felis (strain ATCC VR-1525 / URRWXCal2) (Rickettsia azadi).